A 130-amino-acid chain; its full sequence is Large ribosomal subunit protein eL22 (130 aa).

The protein belongs to the eukaryotic ribosomal protein eL22 family.

This is Large ribosomal subunit protein eL22 (rpl-22) from Caenorhabditis elegans.